The primary structure comprises 85 residues: uncharacterized protein (85 aa).

This sequence belongs to the YciI family.

This is an uncharacterized protein from Bacillus subtilis (strain 168).